Reading from the N-terminus, the 81-residue chain is Ferredoxin (81 aa).

In terms of domain architecture, 4Fe-4S ferredoxin-type spans 2–30; it reads KYTIVDKETCIACGACGAAAPDIYDYDED. [4Fe-4S] cluster-binding residues include Cys11, Cys14, Cys17, and Cys61.

It depends on [4Fe-4S] cluster as a cofactor.

Ferredoxins are iron-sulfur proteins that transfer electrons in a wide variety of metabolic reactions. The polypeptide is Ferredoxin (Bacillus thermoproteolyticus).